Consider the following 64-residue polypeptide: Large ribosomal subunit protein bL35 (64 aa).

The tract at residues 1 to 55 (MPKMKTNKSVSARFKLTASGQLKRTRPGKRHKLSKKSSQEKRNLSKQPLVDKGQV) is disordered. Basic residues predominate over residues 23 to 35 (KRTRPGKRHKLSK).

This sequence belongs to the bacterial ribosomal protein bL35 family.

This Chlamydia pneumoniae (Chlamydophila pneumoniae) protein is Large ribosomal subunit protein bL35.